Here is a 67-residue protein sequence, read N- to C-terminus: Brevinin-1CDYa (67 aa).

A signal peptide spans 1–22 (MFTLKKSLLLIFFLGTINLSLC). The propeptide occupies 23–45 (EEERNADEEERRDDLEERDVEVE). Cysteines 61 and 67 form a disulfide.

It belongs to the frog skin active peptide (FSAP) family. Brevinin subfamily. As to expression, expressed by the skin glands.

Its subcellular location is the secreted. In terms of biological role, antimicrobial peptide. Has low activity against the Gram-positive bacterium S.aureus (MIC=12.5 uM) and the Gram-negative bacterium E.coli (MIC=25 uM). Has weak hemolytic activity against human erythrocytes. The polypeptide is Brevinin-1CDYa (Rana dybowskii (Dybovsky's frog)).